The chain runs to 818 residues: Phenylalanine--tRNA ligase beta subunit (818 aa).

The tRNA-binding domain maps to 39–148 (AAELQKFEVA…EDAVVGENFT (110 aa)). One can recognise a B5 domain in the interval 423–498 (PQKKPLDFSA…RIYGYDKIES (76 aa)). Residues aspartate 476, aspartate 482, glutamate 485, and glutamate 486 each contribute to the Mg(2+) site. Positions 724 to 817 (SDFQANFRDY…IEQKFQGTLR (94 aa)) constitute an FDX-ACB domain.

Belongs to the phenylalanyl-tRNA synthetase beta subunit family. Type 1 subfamily. In terms of assembly, tetramer of two alpha and two beta subunits. The cofactor is Mg(2+).

Its subcellular location is the cytoplasm. The catalysed reaction is tRNA(Phe) + L-phenylalanine + ATP = L-phenylalanyl-tRNA(Phe) + AMP + diphosphate + H(+). The chain is Phenylalanine--tRNA ligase beta subunit from Rickettsia felis (strain ATCC VR-1525 / URRWXCal2) (Rickettsia azadi).